Here is a 334-residue protein sequence, read N- to C-terminus: Aspartate carbamoyltransferase catalytic subunit (334 aa).

Residues R70 and T71 each coordinate carbamoyl phosphate. K98 contributes to the L-aspartate binding site. Carbamoyl phosphate-binding residues include R120, H150, and Q153. Residues R183 and R239 each contribute to the L-aspartate site. Positions 280 and 281 each coordinate carbamoyl phosphate.

It belongs to the aspartate/ornithine carbamoyltransferase superfamily. ATCase family. In terms of assembly, heterododecamer (2C3:3R2) of six catalytic PyrB chains organized as two trimers (C3), and six regulatory PyrI chains organized as three dimers (R2).

The catalysed reaction is carbamoyl phosphate + L-aspartate = N-carbamoyl-L-aspartate + phosphate + H(+). It functions in the pathway pyrimidine metabolism; UMP biosynthesis via de novo pathway; (S)-dihydroorotate from bicarbonate: step 2/3. In terms of biological role, catalyzes the condensation of carbamoyl phosphate and aspartate to form carbamoyl aspartate and inorganic phosphate, the committed step in the de novo pyrimidine nucleotide biosynthesis pathway. This chain is Aspartate carbamoyltransferase catalytic subunit, found in Pseudomonas aeruginosa (strain LESB58).